Consider the following 552-residue polypeptide: Hydroxylamine reductase (552 aa).

4 residues coordinate [2Fe-2S] cluster: Cys-5, Cys-8, Cys-20, and Cys-27. Hybrid [4Fe-2O-2S] cluster-binding residues include His-251, Glu-275, Cys-319, Cys-407, Cys-435, Cys-460, Glu-494, and Lys-496. Position 407 is a cysteine persulfide (Cys-407).

It belongs to the HCP family. Requires [2Fe-2S] cluster as cofactor. The cofactor is hybrid [4Fe-2O-2S] cluster.

Its subcellular location is the cytoplasm. It catalyses the reaction A + NH4(+) + H2O = hydroxylamine + AH2 + H(+). In terms of biological role, catalyzes the reduction of hydroxylamine to form NH(3) and H(2)O. The sequence is that of Hydroxylamine reductase from Shigella sonnei (strain Ss046).